The chain runs to 218 residues: Adenylate kinase (218 aa).

10–15 (GAGKGT) serves as a coordination point for ATP. The NMP stretch occupies residues 30–59 (STGDMLRAAIAKGTPLGLSAQKIMESGGLV). Residues Thr-31, Arg-36, 57 to 59 (GLV), 85 to 88 (GFPR), and Gln-92 each bind AMP. The LID stretch occupies residues 122–159 (GRRIHQPSGRVYHVVNQPPKNPGVDDITGEPLIQRDDD). Residues Arg-123 and 132–133 (VY) contribute to the ATP site. AMP-binding residues include Arg-156 and Arg-167. Position 203 (Gly-203) interacts with ATP.

Belongs to the adenylate kinase family. As to quaternary structure, monomer.

Its subcellular location is the cytoplasm. It catalyses the reaction AMP + ATP = 2 ADP. Its pathway is purine metabolism; AMP biosynthesis via salvage pathway; AMP from ADP: step 1/1. Functionally, catalyzes the reversible transfer of the terminal phosphate group between ATP and AMP. Plays an important role in cellular energy homeostasis and in adenine nucleotide metabolism. The protein is Adenylate kinase of Legionella pneumophila (strain Corby).